The following is a 392-amino-acid chain: Stilbene synthase 2 (392 aa).

A substrate-binding site is contributed by 55 to 58 (KFNR). The active site involves C164. Substrate is bound by residues L267 and 305 to 307 (GGP).

Belongs to the thiolase-like superfamily. Chalcone/stilbene synthases family. In terms of assembly, homodimer.

The protein resides in the cytoplasm. It carries out the reaction 4-coumaroyl-CoA + 3 malonyl-CoA + 3 H(+) = trans-resveratrol + 4 CO2 + 4 CoA. The protein operates within phytoalexin biosynthesis; 3,4',5-trihydroxystilbene biosynthesis; 3,4',5-trihydroxystilbene from trans-4-coumarate: step 2/2. Its function is as follows. Mediates resistance to pathogens which are sensitive to stilbenes. The protein is Stilbene synthase 2 of Vitis vinifera (Grape).